We begin with the raw amino-acid sequence, 64 residues long: Micrurotoxin 1 (64 aa).

Disulfide bonds link Cys-3/Cys-24, Cys-6/Cys-11, Cys-17/Cys-41, Cys-45/Cys-57, and Cys-58/Cys-63.

This sequence belongs to the three-finger toxin family. Ancestral subfamily. As to expression, expressed by the venom gland.

The protein localises to the secreted. Functionally, allosteric modulator of the GABA(A) receptor (GABR), possibly increasing receptor affinity for the agonist, thus enhancing receptor opening and macroscopic desensitization. In vivo, intracerebroventricular injection into mice results in periods of reduced basal activity, followed by bursts of intense seizures and death. In Micrurus mipartitus (Red-tailed coral snake), this protein is Micrurotoxin 1.